We begin with the raw amino-acid sequence, 130 residues long: Small ribosomal subunit protein uS9 (130 aa).

Positions 102-130 are disordered; it reads GLLTRDSRMKERKKPGLKGARRAPQFSKR. Positions 111 to 130 are enriched in basic residues; sequence KERKKPGLKGARRAPQFSKR.

Belongs to the universal ribosomal protein uS9 family.

This Listeria monocytogenes serovar 1/2a (strain ATCC BAA-679 / EGD-e) protein is Small ribosomal subunit protein uS9.